A 145-amino-acid polypeptide reads, in one-letter code: Large ribosomal subunit protein uL13 (145 aa).

Belongs to the universal ribosomal protein uL13 family. In terms of assembly, part of the 50S ribosomal subunit. Interacts weakly with proteins L3 and L6.

Its function is as follows. This protein is one of the early assembly proteins of the 50S ribosomal subunit. Binds to 23S rRNA. This Haloarcula marismortui (strain ATCC 43049 / DSM 3752 / JCM 8966 / VKM B-1809) (Halobacterium marismortui) protein is Large ribosomal subunit protein uL13.